A 368-amino-acid chain; its full sequence is DNA integrity scanning protein DisA (368 aa).

The DAC domain occupies 15-153; that stretch reads DERLRATLAA…DGRRHVLDEP (139 aa). Residues Gly-82, Leu-100, and 113-117 contribute to the ATP site; that span reads TRHRS. The interval 101 to 121 is disordered; it reads QPDPSIPTNESGTRHRSAERT. Positions 112–121 are enriched in basic and acidic residues; sequence GTRHRSAERT.

This sequence belongs to the DisA family. Homooctamer. It depends on Mg(2+) as a cofactor.

It catalyses the reaction 2 ATP = 3',3'-c-di-AMP + 2 diphosphate. Functionally, participates in a DNA-damage check-point. DisA forms globular foci that rapidly scan along the chromosomes searching for lesions. Its function is as follows. Also has diadenylate cyclase activity, catalyzing the condensation of 2 ATP molecules into cyclic di-AMP (c-di-AMP). c-di-AMP likely acts as a signaling molecule that may couple DNA integrity with a cellular process. This is DNA integrity scanning protein DisA from Acidothermus cellulolyticus (strain ATCC 43068 / DSM 8971 / 11B).